A 237-amino-acid polypeptide reads, in one-letter code: 2-C-methyl-D-erythritol 4-phosphate cytidylyltransferase (237 aa).

The protein belongs to the IspD/TarI cytidylyltransferase family. IspD subfamily.

The catalysed reaction is 2-C-methyl-D-erythritol 4-phosphate + CTP + H(+) = 4-CDP-2-C-methyl-D-erythritol + diphosphate. Its pathway is isoprenoid biosynthesis; isopentenyl diphosphate biosynthesis via DXP pathway; isopentenyl diphosphate from 1-deoxy-D-xylulose 5-phosphate: step 2/6. Catalyzes the formation of 4-diphosphocytidyl-2-C-methyl-D-erythritol from CTP and 2-C-methyl-D-erythritol 4-phosphate (MEP). This Vibrio vulnificus (strain CMCP6) protein is 2-C-methyl-D-erythritol 4-phosphate cytidylyltransferase.